Consider the following 423-residue polypeptide: LysM domain-containing GPI-anchored protein 3 (423 aa).

A signal peptide spans 1 to 24 (MKNPEKPLLLFLILASSLASMATA). 4 cysteine pairs are disulfide-bonded: Cys31–Cys97, Cys37–Cys160, Cys95–Cys158, and Cys97–Cys160. Residues 107–154 (THYKTRTSDTLGSIADSVYGGLVSPEQIQVANSETDLSVLDVGTKLVI) form the LysM 1 domain. A glycan (N-linked (GlcNAc...) asparagine) is linked at Asn162. The region spanning 173–216 (LSYVVRGIDTMAGIAKRFSTSVTDLTNVNAMGAPDINPGDILAV) is the LysM 2 domain. Disulfide bonds link Cys221–Cys253 and Cys248–Cys276. Asn238 carries N-linked (GlcNAc...) asparagine glycosylation. A glycan (N-linked (GlcNAc...) asparagine) is linked at Asn285. Gly394 is lipidated: GPI-anchor amidated glycine. Positions 395–423 (GSISIASCPLSYYSFIALLIPIGSCFFVF) are cleaved as a propeptide — removed in mature form.

In terms of assembly, interacts with peptidoglycans.

The protein resides in the cell membrane. Required as a cell surface receptor for peptidoglycan (PGN) elicitor signaling leading to innate immunity. Plays an essential role in detecting PGNs and restricting bacterial growth (of Pseudomonas syringae pv. tomato DC3000 for example). The protein is LysM domain-containing GPI-anchored protein 3 (LYM3) of Arabidopsis thaliana (Mouse-ear cress).